We begin with the raw amino-acid sequence, 425 residues long: Bifunctional phosphoribosylaminoimidazole carboxylase/phosphoribosylaminoimidazole succinocarboxamide synthetase (425 aa).

The residue at position 2 (alanine 2) is an N-acetylalanine. Positions 2 to 260 (ATAVVVNIGK…WVADRVELLL (259 aa)) are SAICAR synthetase domain. Tyrosine 22 carries the phosphotyrosine modification. The residue at position 36 (lysine 36) is an N6-acetyllysine. Serine 107 carries the phosphoserine modification. Residue threonine 238 is modified to Phosphothreonine. An N6-acetyllysine modification is found at lysine 247. A linker region spans residues 261 to 266 (KSDSQC). Positions 267-425 (RVVVLMGSTS…ADKKVRQCNL (159 aa)) are AIR carboxylase domain. Serine 274 is modified (phosphoserine). Residue serine 332 coordinates CO2.

It in the N-terminal section; belongs to the SAICAR synthetase family. The protein in the C-terminal section; belongs to the AIR carboxylase family. Class II subfamily. Homooctamer.

The enzyme catalyses 5-amino-1-(5-phospho-D-ribosyl)imidazole-4-carboxylate + L-aspartate + ATP = (2S)-2-[5-amino-1-(5-phospho-beta-D-ribosyl)imidazole-4-carboxamido]succinate + ADP + phosphate + 2 H(+). It catalyses the reaction 5-amino-1-(5-phospho-D-ribosyl)imidazole-4-carboxylate + H(+) = 5-amino-1-(5-phospho-beta-D-ribosyl)imidazole + CO2. Its pathway is purine metabolism; IMP biosynthesis via de novo pathway; 5-amino-1-(5-phospho-D-ribosyl)imidazole-4-carboxamide from 5-amino-1-(5-phospho-D-ribosyl)imidazole-4-carboxylate: step 1/2. The protein operates within purine metabolism; IMP biosynthesis via de novo pathway; 5-amino-1-(5-phospho-D-ribosyl)imidazole-4-carboxylate from 5-amino-1-(5-phospho-D-ribosyl)imidazole (carboxylase route): step 1/1. Functionally, bifunctional phosphoribosylaminoimidazole carboxylase and phosphoribosylaminoimidazole succinocarboxamide synthetase catalyzing two reactions of the de novo purine biosynthetic pathway. The polypeptide is Bifunctional phosphoribosylaminoimidazole carboxylase/phosphoribosylaminoimidazole succinocarboxamide synthetase (Mus musculus (Mouse)).